The primary structure comprises 149 residues: Calmodulin-2 (149 aa).

Ala2 carries the N-acetylalanine modification. 4 EF-hand domains span residues 8 to 43 (EQIA…LGQN), 44 to 79 (PTEA…KMKD), 81 to 116 (DSEE…LGEK), and 117 to 149 (LTDE…MMAK). Ca(2+) is bound by residues Asp21, Asp23, Asp25, Cys27, Glu32, Asp57, Asp59, Asn61, Thr63, Glu68, Asp94, Asp96, Asn98, and Glu105. Lys116 is subject to N6,N6,N6-trimethyllysine. Ca(2+)-binding residues include Asp130, Asp132, Asp134, Gln136, and Glu141.

Belongs to the calmodulin family.

Functionally, calmodulin mediates the control of a large number of enzymes, ion channels and other proteins by Ca(2+). Among the enzymes to be stimulated by the calmodulin-Ca(2+) complex are a number of protein kinases and phosphatases. The polypeptide is Calmodulin-2 (CAM2) (Oryza sativa subsp. indica (Rice)).